The following is a 150-amino-acid chain: Ribosome-binding factor A (150 aa).

Positions 119–150 (VAERAKSAQPAGEPDPYRFDGAAAADDDEPAT) are disordered.

This sequence belongs to the RbfA family. In terms of assembly, monomer. Binds 30S ribosomal subunits, but not 50S ribosomal subunits or 70S ribosomes.

It is found in the cytoplasm. Its function is as follows. One of several proteins that assist in the late maturation steps of the functional core of the 30S ribosomal subunit. Associates with free 30S ribosomal subunits (but not with 30S subunits that are part of 70S ribosomes or polysomes). Required for efficient processing of 16S rRNA. May interact with the 5'-terminal helix region of 16S rRNA. In Acidothermus cellulolyticus (strain ATCC 43068 / DSM 8971 / 11B), this protein is Ribosome-binding factor A.